A 570-amino-acid chain; its full sequence is Proline--tRNA ligase (570 aa).

The protein belongs to the class-II aminoacyl-tRNA synthetase family. ProS type 1 subfamily. In terms of assembly, homodimer.

It localises to the cytoplasm. The enzyme catalyses tRNA(Pro) + L-proline + ATP = L-prolyl-tRNA(Pro) + AMP + diphosphate. Catalyzes the attachment of proline to tRNA(Pro) in a two-step reaction: proline is first activated by ATP to form Pro-AMP and then transferred to the acceptor end of tRNA(Pro). As ProRS can inadvertently accommodate and process non-cognate amino acids such as alanine and cysteine, to avoid such errors it has two additional distinct editing activities against alanine. One activity is designated as 'pretransfer' editing and involves the tRNA(Pro)-independent hydrolysis of activated Ala-AMP. The other activity is designated 'posttransfer' editing and involves deacylation of mischarged Ala-tRNA(Pro). The misacylated Cys-tRNA(Pro) is not edited by ProRS. In Shewanella sp. (strain MR-7), this protein is Proline--tRNA ligase.